The following is a 352-amino-acid chain: Peptide chain release factor 1 (352 aa).

Residue glutamine 233 is modified to N5-methylglutamine. The tract at residues 288 to 309 (NAKDRKEQVGSGDRSERIRTYN) is disordered. Basic and acidic residues predominate over residues 289–306 (AKDRKEQVGSGDRSERIR).

This sequence belongs to the prokaryotic/mitochondrial release factor family. In terms of processing, methylated by PrmC. Methylation increases the termination efficiency of RF1.

The protein localises to the cytoplasm. Its function is as follows. Peptide chain release factor 1 directs the termination of translation in response to the peptide chain termination codons UAG and UAA. This chain is Peptide chain release factor 1 (prfA), found in Helicobacter pylori (strain ATCC 700392 / 26695) (Campylobacter pylori).